The sequence spans 88 residues: Actobindin (88 aa).

The residue at position 1 (methionine 1) is an N-acetylmethionine. The interval 1–22 is disordered; that stretch reads MNPELQSAIGQGAALKHAETVD. Lysine 35 carries the N6,N6,N6-trimethyllysine modification. Residues 37–54 form the WH2 domain; the sequence is DRSSFLEEVAKPHELKHA. Lysine 72 is subject to N6,N6,N6-trimethyllysine.

Monomer.

Is able to bind two actin monomers at high concentrations of G-actin. This chain is Actobindin, found in Acanthamoeba castellanii (Amoeba).